Consider the following 207-residue polypeptide: Abscisic acid receptor PYL4 (207 aa).

The START-like stretch occupies residues 45-195 (HEVGPNQCCS…NLQSLAKIAE (151 aa)). Cys52 and Cys176 are disulfide-bonded. Abscisate contacts are provided by residues Lys81, 111 to 116 (AASSTE), 138 to 144 (RLSNYRS), and Glu160. Positions 107–111 (SGLPA) match the Gate loop motif. The Latch loop signature appears at 137 to 139 (HRL).

The protein belongs to the PYR/PYL/RCAR abscisic acid intracellular receptor family. In terms of assembly, monomer. Homodimer. Binds ABA on one subunit only. Interacts with HAB1, ABI1 and ABI2, and possibly with other PP2Cs. Binds to CARs protein in an ABA-independent manner, both at the plasma membrane and in the nucleus. Interacts directly with CAR1 and CAR4. Interacts with TOPP1. Interacts with DDA1. Interacts with FREE1 (via N-terminus). Interacts with the E3 ubiquitin-protein ligase RSL1 at the plasma membrane. Post-translationally, ubiquitynated and degraded by the proteasome upon binding to the E3 ubiquitin-protein ligase RSL1 at the plasma membrane.

The protein localises to the cytoplasm. Its subcellular location is the nucleus. It is found in the cell membrane. The protein resides in the vacuole. In terms of biological role, receptor for abscisic acid (ABA) required for ABA-mediated responses such as stomatal closure and germination inhibition. Inhibits the activity of group-A protein phosphatases type 2C (PP2Cs) when activated by ABA. Can be activated by both (-)-ABA and (+)-ABA. The polypeptide is Abscisic acid receptor PYL4 (Arabidopsis thaliana (Mouse-ear cress)).